We begin with the raw amino-acid sequence, 422 residues long: Phosphoserine aminotransferase 2, chloroplastic (422 aa).

The transit peptide at 1–50 directs the protein to the chloroplast; that stretch reads MAASTNSFLIGNQTQIPSLKPKSISQSFIHFTKPNTINLTTRTKSVSIRC. At Ala51 the chain carries N-acetylalanine. Arg101 provides a ligand contact to L-glutamate. Residues 135–136, Trp161, Thr211, Asp233, and Gln256 contribute to the pyridoxal 5'-phosphate site; that span reads AT. Position 257 is an N6-(pyridoxal phosphate)lysine (Lys257). 298–299 is a pyridoxal 5'-phosphate binding site; that stretch reads NT.

It belongs to the class-V pyridoxal-phosphate-dependent aminotransferase family. SerC subfamily. Requires pyridoxal 5'-phosphate as cofactor.

Its subcellular location is the plastid. The protein localises to the chloroplast. The enzyme catalyses O-phospho-L-serine + 2-oxoglutarate = 3-phosphooxypyruvate + L-glutamate. It carries out the reaction 4-(phosphooxy)-L-threonine + 2-oxoglutarate = (R)-3-hydroxy-2-oxo-4-phosphooxybutanoate + L-glutamate. It participates in amino-acid biosynthesis; L-serine biosynthesis; L-serine from 3-phospho-D-glycerate: step 2/3. Involved in the plastidial phosphorylated pathway of serine biosynthesis (PPSB). Catalyzes the reversible conversion of 3-phosphohydroxypyruvate to phosphoserine. The polypeptide is Phosphoserine aminotransferase 2, chloroplastic (PSAT2) (Arabidopsis thaliana (Mouse-ear cress)).